A 106-amino-acid polypeptide reads, in one-letter code: UPF0145 protein AZOSEA16190 (106 aa).

It belongs to the UPF0145 family.

The protein is UPF0145 protein AZOSEA16190 of Aromatoleum aromaticum (strain DSM 19018 / LMG 30748 / EbN1) (Azoarcus sp. (strain EbN1)).